The chain runs to 207 residues: 5-amino-6-(5-phosphoribosylamino)uracil reductase (207 aa).

A substrate-binding site is contributed by Ser6. Position 8 (Trp8) interacts with NADP(+). Residue Arg22 participates in substrate binding. NADP(+) is bound at residue Asp38. Substrate contacts are provided by Leu42 and Arg45. Residue Ser72 participates in NADP(+) binding. Glu137 contributes to the substrate binding site.

This sequence belongs to the HTP reductase family.

It catalyses the reaction 5-amino-6-(5-phospho-D-ribitylamino)uracil + NADP(+) = 5-amino-6-(5-phospho-D-ribosylamino)uracil + NADPH + H(+). It functions in the pathway cofactor biosynthesis; riboflavin biosynthesis; 5-amino-6-(D-ribitylamino)uracil from GTP: step 3/4. In Buchnera aphidicola subsp. Acyrthosiphon pisum (strain APS) (Acyrthosiphon pisum symbiotic bacterium), this protein is 5-amino-6-(5-phosphoribosylamino)uracil reductase (ribD2).